The sequence spans 210 residues: Fimbriae Z protein (210 aa).

The region spanning 5 to 121 (SVIIMDTHPI…DIFHAVQMIL (117 aa)) is the Response regulatory domain. At D56 the chain carries 4-aspartylphosphate. In terms of domain architecture, HTH luxR-type spans 143–208 (NSSTVTVLSN…ELIDYAKLYE (66 aa)). The H-T-H motif DNA-binding region spans 167–186 (NKEIADKLLLSNKTVSAHKS).

Its subcellular location is the cytoplasm. In Escherichia coli O157:H7, this protein is Fimbriae Z protein (fimZ).